The primary structure comprises 177 residues: Adenine phosphoribosyltransferase (177 aa).

This sequence belongs to the purine/pyrimidine phosphoribosyltransferase family. In terms of assembly, homodimer.

Its subcellular location is the cytoplasm. It catalyses the reaction AMP + diphosphate = 5-phospho-alpha-D-ribose 1-diphosphate + adenine. It participates in purine metabolism; AMP biosynthesis via salvage pathway; AMP from adenine: step 1/1. Functionally, catalyzes a salvage reaction resulting in the formation of AMP, that is energically less costly than de novo synthesis. The chain is Adenine phosphoribosyltransferase from Synechococcus sp. (strain RCC307).